A 192-amino-acid chain; its full sequence is Phosphoheptose isomerase (192 aa).

An SIS domain is found at 37-192 (LADSFKGGGK…IQLIEKEMVK (156 aa)). 52–54 (NGG) is a binding site for substrate. His61 and Glu65 together coordinate Zn(2+). Residues Glu65, 93-94 (ND), 119-121 (STS), Ser124, and Gln172 contribute to the substrate site. Residues Gln172 and His180 each contribute to the Zn(2+) site.

This sequence belongs to the SIS family. GmhA subfamily. In terms of assembly, homotetramer. The cofactor is Zn(2+).

It localises to the cytoplasm. The catalysed reaction is 2 D-sedoheptulose 7-phosphate = D-glycero-alpha-D-manno-heptose 7-phosphate + D-glycero-beta-D-manno-heptose 7-phosphate. The protein operates within carbohydrate biosynthesis; D-glycero-D-manno-heptose 7-phosphate biosynthesis; D-glycero-alpha-D-manno-heptose 7-phosphate and D-glycero-beta-D-manno-heptose 7-phosphate from sedoheptulose 7-phosphate: step 1/1. In terms of biological role, catalyzes the isomerization of sedoheptulose 7-phosphate in D-glycero-D-manno-heptose 7-phosphate. This chain is Phosphoheptose isomerase, found in Escherichia coli O7:K1 (strain IAI39 / ExPEC).